The sequence spans 920 residues: Androgen receptor (920 aa).

The modulating stretch occupies residues 1-559; it reads MEVQLGLGRV…IDYYFPPQKT (559 aa). The interaction with ZNF318 stretch occupies residues 1 to 587; that stretch reads MEVQLGLGRV…GSCKVFFKRA (587 aa). Disordered regions lie at residues 36 to 167 and 195 to 228; these read NPGP…LSLL and QQQQ…YLGG. Residues 44 to 91 are compositionally biased toward low complexity; it reads AASAAPPGASLLLLQQQQQQQQQQQQQQQQQQQQQQQETSPRQQQQQQ. A Phosphoserine; by CDK9 modification is found at serine 83. Phosphoserine is present on serine 96. Residues 195 to 217 show a composition bias toward low complexity; it reads QQQQQEAVSEGSSSGRAREASGA. Residues 218 to 228 are compositionally biased toward polar residues; that stretch reads PTSSKDNYLGG. Tyrosine 225 is subject to Phosphotyrosine; by CSK. Residue serine 258 is modified to Phosphoserine. Position 269 is a phosphotyrosine; by CSK and TNK2 (tyrosine 269). A phosphotyrosine; by CSK mark is found at tyrosine 309, tyrosine 348, tyrosine 359, and tyrosine 364. Tyrosine 365 is modified (phosphotyrosine; by CSK and TNK2). Residue lysine 388 forms a Glycyl lysine isopeptide (Lys-Gly) (interchain with G-Cter in SUMO) linkage. At tyrosine 395 the chain carries Phosphotyrosine; by CSK. Lysine 521 is covalently cross-linked (Glycyl lysine isopeptide (Lys-Gly) (interchain with G-Cter in SUMO)). Phosphotyrosine; by CSK occurs at positions 535 and 552. Positions 552–919 are interaction with LPXN; sequence YYFPPQKTCL…GKVKPIYFHT (368 aa). 2 NR C4-type zinc fingers span residues 560–580 and 596–620; these read CLIC…CGSC and CASR…LRKC. Residues 560–632 constitute a DNA-binding region (nuclear receptor); that stretch reads CLICGDEASG…AGMTLGARKL (73 aa). An interaction with HIPK3 region spans residues 572–662; sequence YGALTCGSCK…TEETTQKLTV (91 aa). The interval 592–919 is interaction with CCAR1; it reads QKYLCASRND…GKVKPIYFHT (328 aa). Positions 625–919 are interaction with KAT7; the sequence is MTLGARKLKK…GKVKPIYFHT (295 aa). The residue at position 651 (serine 651) is a Phosphoserine; by STK4/MST1. An NR LBD domain is found at 669–900; the sequence is ECQPIFLNVL…DFPEMMAEII (232 aa). Positions 706 and 753 each coordinate 17beta-hydroxy-5alpha-androstan-3-one. Residues lysine 846 and lysine 848 each participate in a glycyl lysine isopeptide (Lys-Gly) (interchain with G-Cter in ubiquitin) cross-link. Threonine 878 contacts 17beta-hydroxy-5alpha-androstan-3-one. Tyrosine 916 carries the post-translational modification Phosphotyrosine; by CSK.

The protein belongs to the nuclear hormone receptor family. NR3 subfamily. Binds DNA as a homodimer. Part of a ternary complex containing AR, EFCAB6/DJBP and PARK7. Interacts with HIPK3 and NR0B2 in the presence of androgen. The ligand binding domain interacts with KAT7/HBO1 in the presence of dihydrotestosterone. Interacts with EFCAB6/DJBP, PQBP1, RANBP9, RBAK, SPDEF, SRA1, TGFB1I1 and RREB1. Interacts with ZMIZ1/ZIMP10 and ZMIZ2/ZMIP7 which both enhance its transactivation activity. Interacts with SLC30A9 and RAD54L2/ARIP4. Interacts with MACROD1 (via macro domain). Interacts via the ligand-binding domain with LXXLL and FXXLF motifs from NCOA1, NCOA2, NCOA3 and MAGEA11. Interacts (via nuclear receptor DNA binding domain and nuclear receptor ligand binding domain) with NCOA4. The AR N-terminal poly-Gln region binds Ran resulting in enhancement of AR-mediated transactivation. Ran-binding decreases as the poly-Gln length increases. Interacts with HIP1 (via coiled coil domain). Interacts (via ligand-binding domain) with TRIM68. Interacts with TNK2. Interacts with USP26. Interacts with RNF6. Interacts (regulated by RNF6 probably through polyubiquitination) with RNF14; regulates AR transcriptional activity. Interacts with PRMT2 and TRIM24. Interacts with RACK1. Interacts with RANBP10; this interaction enhances dihydrotestosterone-induced AR transcriptional activity. Interacts with PRPF6 in a hormone-independent way; this interaction enhances dihydrotestosterone-induced AR transcriptional activity. Interacts with STK4/MST1. Interacts with ZIPK/DAPK3. Interacts with LPXN. Interacts with MAK. Part of a complex containing AR, MAK and NCOA3. Interacts with CRY1. Interacts with CCAR1 and GATA2. Interacts with ZNF318. Interacts with BUD31. Interacts with ARID4A. Interacts with ARID4B. Interacts (via NR LBD domain) with ZBTB7A; the interaction is direct and androgen-dependent. Interacts with NCOR1. Interacts with NCOR2. Interacts with CRY2 in a ligand-dependent manner. Sumoylated on Lys-388 (major) and Lys-521. Ubiquitinated. Deubiquitinated by USP26. 'Lys-6' and 'Lys-27'-linked polyubiquitination by RNF6 modulates AR transcriptional activity and specificity. Post-translationally, phosphorylated in prostate cancer cells in response to several growth factors including EGF. Phosphorylation is induced by c-Src kinase (CSK). Tyr-535 is one of the major phosphorylation sites and an increase in phosphorylation and Src kinase activity is associated with prostate cancer progression. Phosphorylation by TNK2 enhances the DNA-binding and transcriptional activity and may be responsible for androgen-independent progression of prostate cancer. Phosphorylation at Ser-83 by CDK9 regulates AR promoter selectivity and cell growth. Phosphorylation by PAK6 leads to AR-mediated transcription inhibition. In terms of processing, palmitoylated by ZDHHC7 and ZDHHC21. Palmitoylation is required for plasma membrane targeting and for rapid intracellular signaling via ERK and AKT kinases and cAMP generation. Mainly expressed in heart and skeletal muscle. In terms of tissue distribution, expressed in basal and stromal cells of the prostate (at protein level).

It localises to the nucleus. The protein localises to the cytoplasm. With respect to regulation, AIM-100 (4-amino-5,6-biaryl-furo[2,3-d]pyrimidine) suppresses TNK2-mediated phosphorylation at Tyr-269. Inhibits the binding of the Tyr-269 phosphorylated form to androgen-responsive enhancers (AREs) and its transcriptional activity. In terms of biological role, steroid hormone receptors are ligand-activated transcription factors that regulate eukaryotic gene expression and affect cellular proliferation and differentiation in target tissues. Transcription factor activity is modulated by bound coactivator and corepressor proteins like ZBTB7A that recruits NCOR1 and NCOR2 to the androgen response elements/ARE on target genes, negatively regulating androgen receptor signaling and androgen-induced cell proliferation. Transcription activation is also down-regulated by NR0B2. Activated, but not phosphorylated, by HIPK3 and ZIPK/DAPK3. Its function is as follows. Lacks the C-terminal ligand-binding domain and may therefore constitutively activate the transcription of a specific set of genes independently of steroid hormones. This Homo sapiens (Human) protein is Androgen receptor (AR).